Here is a 76-residue protein sequence, read N- to C-terminus: NADH-ubiquinone oxidoreductase chain 4L (76 aa).

The next 3 helical transmembrane spans lie at 1–21, 29–49, and 56–76; these read MTPV…GLAF, ALLC…LWAL, and YSVA…AGLA.

It belongs to the complex I subunit 4L family.

The protein localises to the mitochondrion membrane. The enzyme catalyses a ubiquinone + NADH + 5 H(+)(in) = a ubiquinol + NAD(+) + 4 H(+)(out). Core subunit of the mitochondrial membrane respiratory chain NADH dehydrogenase (Complex I) which catalyzes electron transfer from NADH through the respiratory chain, using ubiquinone as an electron acceptor. Part of the enzyme membrane arm which is embedded in the lipid bilayer and involved in proton translocation. The sequence is that of NADH-ubiquinone oxidoreductase chain 4L (MT-ND4L) from Oncorhynchus masou (Cherry salmon).